Reading from the N-terminus, the 328-residue chain is Alcohol-sensitive RING finger protein 1 (328 aa).

An RING-type 1; atypical zinc finger spans residues 18-61 (CSICWESMPSGVGRLMPCGHEYHLACIRKWFHLHSGNRSCPVCR). An RING-type 2; atypical zinc finger spans residues 129-177 (CGICGEMNGDIDTCCNRCHHMYHHSCLGQLLVEVNAEREQGWSHCIFCY).

The protein resides in the cytoplasm. It localises to the nucleus. Functionally, required for tolerance to alcohol. In Eremothecium gossypii (strain ATCC 10895 / CBS 109.51 / FGSC 9923 / NRRL Y-1056) (Yeast), this protein is Alcohol-sensitive RING finger protein 1 (ASR1).